The primary structure comprises 564 residues: M protein, serotype 12 (564 aa).

Positions 1–41 (MAKNTTNRHYSLRKLKTGTASVAVALTVVGAGLVAGQTVRA) are cleaved as a signal peptide. Residues 44–505 (SDLVAEKQRL…RAGKASDSQT (462 aa)) are a coiled coil. C repeat units lie at residues 285–319 (KQLE…EAEL), 327–361 (AKVT…VEAA), 363–397 (KQLE…EKDL), and 405–439 (DKVK…EKAL). 2 disordered regions span residues 372–391 (SEAS…EAKK) and 404–438 (LDKV…VEKA). Composition is skewed to basic and acidic residues over residues 404–413 (LDKVKEEKQI) and 421–438 (LRRD…VEKA). D repeat units lie at residues 472-477 (AKLEAE), 478-483 (AKALKE), 486-491 (AKQAEE), and 493-498 (AKLRAG). Positions 493–550 (AKLRAGKASDSQTPDAKPGNKAVPGKGQAPQAGTKPNQNKAPMKETKRQLPSTGETAN) are disordered. An LPXTG sorting signal motif is present at residues 542-546 (LPSTG). Position 545 is a pentaglycyl murein peptidoglycan amidated threonine (Thr545). Positions 546–564 (GETANPFFTAAALTVMAAA) are cleaved as a propeptide — removed by sortase.

Belongs to the M protein family.

It is found in the secreted. The protein localises to the cell wall. Functionally, this protein is one of the different antigenic serotypes of protein M. Protein M is closely associated with virulence of the bacterium and can render the organism resistant to phagocytosis. The sequence is that of M protein, serotype 12 (emm12) from Streptococcus pyogenes.